Consider the following 191-residue polypeptide: Inosine triphosphate pyrophosphatase (191 aa).

An ITP-binding site is contributed by 9–14 (TGNAKK). Glutamate 39 serves as a coordination point for Mg(2+). ITP contacts are provided by residues lysine 51, 67 to 68 (DT), lysine 84, 143 to 146 (FGWD), lysine 166, and 171 to 172 (HR).

This sequence belongs to the HAM1 NTPase family. In terms of assembly, homodimer. Mg(2+) serves as cofactor. The cofactor is Mn(2+).

It localises to the cytoplasm. It carries out the reaction ITP + H2O = IMP + diphosphate + H(+). It catalyses the reaction dITP + H2O = dIMP + diphosphate + H(+). The enzyme catalyses XTP + H2O = XMP + diphosphate + H(+). In terms of biological role, pyrophosphatase that hydrolyzes non-canonical purine nucleotides such as inosine triphosphate (ITP), deoxyinosine triphosphate (dITP) or xanthosine 5'-triphosphate (XTP) to their respective monophosphate derivatives. The enzyme does not distinguish between the deoxy- and ribose forms. Probably excludes non-canonical purines from RNA and DNA precursor pools, thus preventing their incorporation into RNA and DNA and avoiding chromosomal lesions. In Drosophila melanogaster (Fruit fly), this protein is Inosine triphosphate pyrophosphatase.